Reading from the N-terminus, the 281-residue chain is MEKFTLVTFYHFVQLENYEDMRDELLSCCIEKGLKGTVLLALEGINGSVAGHDGEIRDFLDFVRRDERLRGLEWKESYTNFQPFQEMKVRLKKEIVALGCAELENMEICETGEYVEPEDWSSLIAREDVKTIDTRNLYETKLGRFKYSIDPETINFRDFQEWVRKWIEKDNVSMEQKIAMYCTGGVRCEKSTAYMKRIGFKNVYQLKGGIINYFLKTKNKDGAWVGDCFVFDDRVAVNVDLEPIQLKCLECSCVVNTDDLKNIPRGRVLCSGCGQNTTRFS.

Positions 125 to 222 (AREDVKTIDT…YFLKTKNKDG (98 aa)) constitute a Rhodanese domain. Catalysis depends on Cys182, which acts as the Cysteine persulfide intermediate.

The protein belongs to the TrhO family.

The enzyme catalyses uridine(34) in tRNA + AH2 + O2 = 5-hydroxyuridine(34) in tRNA + A + H2O. Functionally, catalyzes oxygen-dependent 5-hydroxyuridine (ho5U) modification at position 34 in tRNAs. The chain is tRNA uridine(34) hydroxylase from Neorickettsia sennetsu (strain ATCC VR-367 / Miyayama) (Ehrlichia sennetsu).